The following is a 57-amino-acid chain: Large ribosomal subunit protein bL32 (57 aa).

This sequence belongs to the bacterial ribosomal protein bL32 family.

The polypeptide is Large ribosomal subunit protein bL32 (Shouchella clausii (strain KSM-K16) (Alkalihalobacillus clausii)).